Here is an 81-residue protein sequence, read N- to C-terminus: High-potential iron-sulfur protein (81 aa).

[4Fe-4S] cluster contacts are provided by Cys43, Cys46, Cys59, and Cys73.

This sequence belongs to the high-potential iron-sulfur protein (HiPIP) family. In terms of assembly, homodimer.

The protein localises to the periplasm. Its function is as follows. Specific class of high-redox-potential 4Fe-4S ferredoxins. Functions in anaerobic electron transport in most purple and in some other photosynthetic bacteria and in at least one genus (Paracoccus) of halophilic, denitrifying bacteria. The protein is High-potential iron-sulfur protein of Halochromatium salexigens (Chromatium salexigens).